A 266-amino-acid polypeptide reads, in one-letter code: Cytochrome c oxidase assembly factor 7 homolog (266 aa).

Sel1-like repeat units follow at residues 32-64 (PEACHLLGDYLEGIKKDFEKASKVYKSTCDDYG) and 66-104 (AKSCYKYGNYSFLGKGKSGSKGNPQVAYEYYEKGCNLND). Positions 166 to 179 (AVTASSGSGTSSPP) are enriched in low complexity. The interval 166–187 (AVTASSGSGTSSPPAGQPPLKD) is disordered. Residues 212–247 (MYACANLSQMYARGDGIEKNEKEAEKYKKLALEMQD) form a Sel1-like 3 repeat.

It belongs to the hcp beta-lactamase family.

In terms of biological role, required for locomotion. Probably involved in the regulation of formation/maintenance of motor neurons at presynaptic terminals at the neuromuscular junction. The sequence is that of Cytochrome c oxidase assembly factor 7 homolog from Drosophila melanogaster (Fruit fly).